The chain runs to 782 residues: General transcription and DNA repair factor IIH helicase/translocase subunit XPB (782 aa).

Basic and acidic residues predominate over residues 1–11 (MGKRDRADRDK). Disordered stretches follow at residues 1-51 (MGKR…ESGT) and 220-240 (ISKT…DPQG). A Nuclear localization signal motif is present at residues 6-18 (RADRDKKKSRKRH). The segment covering 21–30 (DEEDDEEDAP) has biased composition (acidic residues). The region spanning 327 to 488 (MFGNGRARSG…DLNFLIGPKL (162 aa)) is the Helicase ATP-binding domain. 340-347 (LPCGAGKS) contributes to the ATP binding site. Positions 441-444 (DEVH) match the DEVH box motif. Residues 542–702 (RACQFLIKFH…LAGMEEEDLA (161 aa)) enclose the Helicase C-terminal domain. Residue serine 686 is modified to Phosphoserine. The residue at position 751 (serine 751) is a Phosphoserine; by CK2.

This sequence belongs to the helicase family. RAD25/XPB subfamily. In terms of assembly, component of the 7-subunit TFIIH core complex composed of XPB/ERCC3, XPD/ERCC2, GTF2H1, GTF2H2, GTF2H3, GTF2H4 and GTF2H5, which is active in NER. The core complex associates with the 3-subunit CDK-activating kinase (CAK) module composed of CCNH/cyclin H, CDK7 and MNAT1 to form the 10-subunit holoenzyme (holo-TFIIH) active in transcription. Interacts with PUF60. Interacts with ATF7IP. Interacts with KAT2A; leading to KAT2A recruitment to promoters and acetylation of histones. Part of TBP-based Pol II pre-initiation complex (PIC), in which Pol II core assembles with general transcription factors and other specific initiation factors including GTF2E1, GTF2E2, GTF2F1, GTF2F2, TCEA1, ERCC2, ERCC3, GTF2H2, GTF2H3, GTF2H4, GTF2H5, GTF2A1, GTF2A2, GTF2B and TBP; this large multi-subunit PIC complex mediates DNA unwinding and targets Pol II core to the transcription start site where the first phosphodiester bond forms. In terms of processing, phosphorylation on Ser-751 by CK2 controls the 5'-excision activity of ERCC1-XPF endonuclease; phosphorylated protein inhibits the excision activity and thus NER. Dephosphorylation reactivates the 5'-excision step. Phosphorylation has no effect on transcription or the 3'-5' helicase activity.

The protein localises to the nucleus. It carries out the reaction Couples ATP hydrolysis with the unwinding of duplex DNA by translocating in the 3'-5' direction.. It catalyses the reaction ATP + H2O = ADP + phosphate + H(+). Phosphorylation on Ser-751 by CK2 controls the 5'-excision activity of ERCC1-XPF endonuclease; phosphorylated protein inhibits the excision activity and thus NER. ATPase activity is stimulated by TFIIH subunit p52 (GTF2H4). DNA translocase activity by this subunit in TFIIH is stimulated by XPA, ERCC5/XPG and XFP plus ERCC1. Functionally, ATP-dependent 3'-5' DNA helicase/translocase; binds dsDNA rather than ssDNA, unzipping it in a translocase rather than classical helicase activity. Component of the general transcription and DNA repair factor IIH (TFIIH) core complex. When complexed to CDK-activating kinase (CAK), involved in RNA transcription by RNA polymerase II. The ATPase activity of XPB/ERCC3, but not its helicase activity, is required for DNA opening; it may wrap around the damaged DNA wedging it open, causing localized melting and twisting that allows XPD/ERCC2 helicase to anchor. The ATP-dependent helicase activity of XPB/ERCC3 may be required for promoter escape. Also involved in transcription-coupled nucleotide excision repair (NER) of damaged DNA. In NER, TFIIH acts by opening DNA around the lesion to allow the excision of the damaged oligonucleotide and its replacement by a new DNA fragment. The structure of the TFIIH transcription complex differs from the NER-TFIIH complex; large movements by XPD/ERCC2 and XPB/ERCC3 are stabilized by XPA. This chain is General transcription and DNA repair factor IIH helicase/translocase subunit XPB (ERCC3), found in Macaca fascicularis (Crab-eating macaque).